Reading from the N-terminus, the 131-residue chain is Small ribosomal subunit protein uS8 (131 aa).

Belongs to the universal ribosomal protein uS8 family. In terms of assembly, part of the 30S ribosomal subunit. Contacts proteins S5 and S12.

Its function is as follows. One of the primary rRNA binding proteins, it binds directly to 16S rRNA central domain where it helps coordinate assembly of the platform of the 30S subunit. This is Small ribosomal subunit protein uS8 from Clostridium novyi (strain NT).